Consider the following 489-residue polypeptide: 3-octaprenyl-4-hydroxybenzoate carboxy-lyase (489 aa).

A Mn(2+)-binding site is contributed by asparagine 172. Residues 175 to 177 (IYR), 189 to 191 (RWL), and 194 to 195 (RG) each bind prenylated FMN. A Mn(2+)-binding site is contributed by glutamate 238. The active-site Proton donor is aspartate 287.

The protein belongs to the UbiD family. Homohexamer. It depends on prenylated FMN as a cofactor. Requires Mn(2+) as cofactor.

Its subcellular location is the cell membrane. The catalysed reaction is a 4-hydroxy-3-(all-trans-polyprenyl)benzoate + H(+) = a 2-(all-trans-polyprenyl)phenol + CO2. It participates in cofactor biosynthesis; ubiquinone biosynthesis. Catalyzes the decarboxylation of 3-octaprenyl-4-hydroxy benzoate to 2-octaprenylphenol, an intermediate step in ubiquinone biosynthesis. This is 3-octaprenyl-4-hydroxybenzoate carboxy-lyase from Tolumonas auensis (strain DSM 9187 / NBRC 110442 / TA 4).